The sequence spans 414 residues: Putative dipeptidase ARB_02715 (414 aa).

The signal sequence occupies residues 1-20 (MAALFVSLLALTSLVPVQGA). The Zn(2+) site is built by H45, D47, and E157. A disulfide bridge connects residues C96 and C186. H184 serves as a coordination point for substrate. Zn(2+)-binding residues include H228 and H249. Residues R260 and D320 each coordinate substrate. Residue N392 is glycosylated (N-linked (GlcNAc...) asparagine).

This sequence belongs to the metallo-dependent hydrolases superfamily. Peptidase M19 family. It depends on Zn(2+) as a cofactor.

It carries out the reaction an L-aminoacyl-L-amino acid + H2O = 2 an L-alpha-amino acid. Hydrolyzes a wide range of dipeptides. This Arthroderma benhamiae (strain ATCC MYA-4681 / CBS 112371) (Trichophyton mentagrophytes) protein is Putative dipeptidase ARB_02715.